The primary structure comprises 155 residues: Ribosome maturation factor RimP (155 aa).

This sequence belongs to the RimP family.

The protein resides in the cytoplasm. Functionally, required for maturation of 30S ribosomal subunits. This Maridesulfovibrio salexigens (strain ATCC 14822 / DSM 2638 / NCIMB 8403 / VKM B-1763) (Desulfovibrio salexigens) protein is Ribosome maturation factor RimP.